A 164-amino-acid chain; its full sequence is SsrA-binding protein (164 aa).

The protein belongs to the SmpB family.

It is found in the cytoplasm. In terms of biological role, required for rescue of stalled ribosomes mediated by trans-translation. Binds to transfer-messenger RNA (tmRNA), required for stable association of tmRNA with ribosomes. tmRNA and SmpB together mimic tRNA shape, replacing the anticodon stem-loop with SmpB. tmRNA is encoded by the ssrA gene; the 2 termini fold to resemble tRNA(Ala) and it encodes a 'tag peptide', a short internal open reading frame. During trans-translation Ala-aminoacylated tmRNA acts like a tRNA, entering the A-site of stalled ribosomes, displacing the stalled mRNA. The ribosome then switches to translate the ORF on the tmRNA; the nascent peptide is terminated with the 'tag peptide' encoded by the tmRNA and targeted for degradation. The ribosome is freed to recommence translation, which seems to be the essential function of trans-translation. The sequence is that of SsrA-binding protein from Shewanella sediminis (strain HAW-EB3).